We begin with the raw amino-acid sequence, 79 residues long: EAMZP30-47 protein (79 aa).

A compositionally biased stretch (low complexity) spans 1-12; that stretch reads HAASPRGRPQQR. The tract at residues 1 to 47 is disordered; sequence HAASPRGRPQQRSSRHGAEGPDTTRRGSCCSSSSSCCRPSTPRHPHN. Over residues 16 to 25 the composition is skewed to basic and acidic residues; sequence HGAEGPDTTR. Low complexity predominate over residues 28-37; sequence SCCSSSSSCC.

It is found in the membrane. The protein localises to the cell membrane. It localises to the cytoplasmic vesicle. The protein resides in the secretory vesicle. Its subcellular location is the rhoptry. In Eimeria acervulina (Coccidian parasite), this protein is EAMZP30-47 protein (CMC17).